Reading from the N-terminus, the 393-residue chain is S-adenosylmethionine synthase (393 aa).

His-17 serves as a coordination point for ATP. Asp-19 serves as a coordination point for Mg(2+). Residue Glu-45 coordinates K(+). Residues Glu-58 and Gln-106 each coordinate L-methionine. The segment at 106 to 116 is flexible loop; it reads QSAHIAQGVDA. Residues 171–173, Asp-246, 252–253, Ala-269, and Lys-273 contribute to the ATP site; these read DAK and RK. Asp-246 lines the L-methionine pocket. Lys-277 is a binding site for L-methionine.

This sequence belongs to the AdoMet synthase family. In terms of assembly, homotetramer; dimer of dimers. It depends on Mg(2+) as a cofactor. K(+) serves as cofactor.

It is found in the cytoplasm. It catalyses the reaction L-methionine + ATP + H2O = S-adenosyl-L-methionine + phosphate + diphosphate. The protein operates within amino-acid biosynthesis; S-adenosyl-L-methionine biosynthesis; S-adenosyl-L-methionine from L-methionine: step 1/1. Its function is as follows. Catalyzes the formation of S-adenosylmethionine (AdoMet) from methionine and ATP. The overall synthetic reaction is composed of two sequential steps, AdoMet formation and the subsequent tripolyphosphate hydrolysis which occurs prior to release of AdoMet from the enzyme. This is S-adenosylmethionine synthase from Roseobacter denitrificans (strain ATCC 33942 / OCh 114) (Erythrobacter sp. (strain OCh 114)).